Reading from the N-terminus, the 347-residue chain is NADH-ubiquinone oxidoreductase chain 2 (347 aa).

A run of 11 helical transmembrane segments spans residues 3–23 (PPILIIIMSTVILGTMIVMTS), 25–45 (HWMLTWIGFEMNMLAIIPILM), 59–79 (YFLTQATASMLLMMGIIINLL), 96–116 (ILMTTALAMKLGLAPFHFWVP), 122–142 (ISLSSGMILLTWQKIAPLSVL), 149–169 (INPNLLLPMAILSVLIGGWGG), 178–198 (IMAYSSITHMGWMTAILLYNP), 201–221 (MFLNLIIYITMTLSTFMLFMI), 237–257 (APLITSLILTLMLSLGGLPPL), 274–294 (EMIILPTFLAITALLNLYFYM), and 323–343 (MIFLPPLIITSTMLLPLTPMI).

It belongs to the complex I subunit 2 family. As to quaternary structure, core subunit of respiratory chain NADH dehydrogenase (Complex I) which is composed of 45 different subunits. Interacts with TMEM242.

The protein localises to the mitochondrion inner membrane. It catalyses the reaction a ubiquinone + NADH + 5 H(+)(in) = a ubiquinol + NAD(+) + 4 H(+)(out). Functionally, core subunit of the mitochondrial membrane respiratory chain NADH dehydrogenase (Complex I) which catalyzes electron transfer from NADH through the respiratory chain, using ubiquinone as an electron acceptor. Essential for the catalytic activity and assembly of complex I. The polypeptide is NADH-ubiquinone oxidoreductase chain 2 (Civettictis civetta (African civet)).